We begin with the raw amino-acid sequence, 531 residues long: T-complex protein 1 subunit zeta (531 aa).

Alanine 2 is subject to N-acetylalanine. Position 5 is an N6-acetyllysine (lysine 5). Glycine 39 contributes to the ADP binding site. Glycine 39 provides a ligand contact to ATP. Aspartate 90 is a Mg(2+) binding site. The ADP site is built by glycine 91, threonine 92, threonine 93, serine 94, threonine 158, and lysine 159. ATP is bound by residues glycine 91, threonine 92, and threonine 93. Position 199 is an N6-acetyllysine (lysine 199). The residue at position 205 (serine 205) is a Phosphoserine. Lysine 251 participates in a covalent cross-link: Glycyl lysine isopeptide (Lys-Gly) (interchain with G-Cter in SUMO2). N6-acetyllysine occurs at positions 287, 365, 377, and 388. Alanine 411 contacts ADP. ATP-binding residues include alanine 411, glycine 412, aspartate 496, and lysine 501. Aspartate 496 contributes to the ADP binding site.

This sequence belongs to the TCP-1 chaperonin family. Component of the chaperonin-containing T-complex (TRiC), a hexadecamer composed of two identical back-to-back stacked rings enclosing a protein folding chamber. Each ring is made up of eight different subunits: TCP1/CCT1, CCT2, CCT3, CCT4, CCT5, CCT6A/CCT6, CCT7, CCT8. Interacts with PACRG.

It is found in the cytoplasm. The enzyme catalyses ATP + H2O = ADP + phosphate + H(+). Component of the chaperonin-containing T-complex (TRiC), a molecular chaperone complex that assists the folding of actin, tubulin and other proteins upon ATP hydrolysis. The TRiC complex mediates the folding of WRAP53/TCAB1, thereby regulating telomere maintenance. In Oryctolagus cuniculus (Rabbit), this protein is T-complex protein 1 subunit zeta (CCT6).